We begin with the raw amino-acid sequence, 361 residues long: Chorismate synthase (361 aa).

Residues R48 and R54 each coordinate NADP(+). Residues 125–127 (RSS), 238–239 (NA), G278, 293–297 (KPTSS), and R319 contribute to the FMN site.

Belongs to the chorismate synthase family. Homotetramer. FMNH2 is required as a cofactor.

The catalysed reaction is 5-O-(1-carboxyvinyl)-3-phosphoshikimate = chorismate + phosphate. The protein operates within metabolic intermediate biosynthesis; chorismate biosynthesis; chorismate from D-erythrose 4-phosphate and phosphoenolpyruvate: step 7/7. Catalyzes the anti-1,4-elimination of the C-3 phosphate and the C-6 proR hydrogen from 5-enolpyruvylshikimate-3-phosphate (EPSP) to yield chorismate, which is the branch point compound that serves as the starting substrate for the three terminal pathways of aromatic amino acid biosynthesis. This reaction introduces a second double bond into the aromatic ring system. In Yersinia enterocolitica serotype O:8 / biotype 1B (strain NCTC 13174 / 8081), this protein is Chorismate synthase.